Here is a 660-residue protein sequence, read N- to C-terminus: F-box/LRR-repeat protein 5 (660 aa).

The interval 1-157 (MAPFPDEVDL…IKKKVIAQHC (157 aa)) is hemerythrin-like. Residues H15, H57, E58, E61, H80, H124, and E127 each coordinate Fe(3+). Positions 200–246 (SASICNLPPEVMLNIFSYLNPQDLCRCSQVNTKWAQLARTGSLWRHL) constitute an F-box domain. The segment at 283 to 305 (YQEWDEDADIDESEETGEDDPSI) is disordered. The span at 285-303 (EWDEDADIDESEETGEDDP) shows a compositional bias: acidic residues. 8 LRR repeats span residues 311-337 (EKELLNSLVHYILPYIGHSVKTLVLAY), 338-362 (SSATSNKVIRQILEYCPNMEHLDLT), 363-389 (QTDISDSAFNGWCFGACQTLRHIDLSG), 390-417 (CEKITDSALEKLSVALGMPLAHKKRLLK), 551-576 (IRDICPGSAKLDQQVARVLQFLSLSG), 577-604 (CHQITDHGLRVLTIGGGLPNLEHLNLSG), 605-630 (CLNVTGSGLQDLVSACPSLNDEHFYY), and 631-649 (CDNISGPHAATASGCQNLQ). The [2Fe-2S] cluster site is built by C631, C645, C655, and C656.

As to quaternary structure, part of a SCF (SKP1-cullin-F-box) protein ligase complex. The cofactor is [2Fe-2S] cluster. Post-translationally, ubiquitinated upon iron and oxygen depletion, leading to its degradation by the proteasome. Ubiquitination is regulated by the hemerythrin-like region that acts as an oxygen and iron sensor.

Its subcellular location is the cytoplasm. The protein localises to the perinuclear region. The protein resides in the nucleus. It participates in protein modification; protein ubiquitination. In terms of biological role, component of some SCF (SKP1-cullin-F-box) protein ligase complex that plays a central role in iron homeostasis by promoting the ubiquitination and subsequent degradation of ireb2/irp2. Upon high iron and oxygen level, it specifically recognizes and binds ireb2/irp2, promoting its ubiquitination and degradation by the proteasome. The protein is F-box/LRR-repeat protein 5 (fbxl5) of Xenopus tropicalis (Western clawed frog).